A 180-amino-acid polypeptide reads, in one-letter code: ATP-dependent protease subunit HslV (180 aa).

Thr-5 is an active-site residue. Na(+)-binding residues include Gly-161, Cys-164, and Thr-167.

This sequence belongs to the peptidase T1B family. HslV subfamily. A double ring-shaped homohexamer of HslV is capped on each side by a ring-shaped HslU homohexamer. The assembly of the HslU/HslV complex is dependent on binding of ATP.

The protein resides in the cytoplasm. The enzyme catalyses ATP-dependent cleavage of peptide bonds with broad specificity.. With respect to regulation, allosterically activated by HslU binding. Its function is as follows. Protease subunit of a proteasome-like degradation complex believed to be a general protein degrading machinery. This Campylobacter jejuni subsp. jejuni serotype O:2 (strain ATCC 700819 / NCTC 11168) protein is ATP-dependent protease subunit HslV.